The sequence spans 588 residues: Mitochondrial tRNA methylthiotransferase CDK5RAP1 (588 aa).

Residues 1–30 (MHPLRCVLQVQRLSAPFTSMCWVLLRTCRA) constitute a mitochondrion transit peptide. Disordered stretches follow at residues 33-53 (SVSSTPCPSPEAKSSEAQKDF) and 70-91 (ASVPQEKPSSPEVEDPPPYLSG). One can recognise an MTTase N-terminal domain in the interval 99-219 (RKVYLETYGC…LPRLLAVVES (121 aa)). 6 residues coordinate [4Fe-4S] cluster: Cys108, Cys144, Cys182, Cys257, Cys261, and Cys264. Residues 243–498 (SPSATSAFVS…TVFREEASKA (256 aa)) enclose the Radical SAM core domain. In terms of domain architecture, TRAM spans 500 to 575 (KTSVGCSQLV…SQTLKGHILC (76 aa)).

This sequence belongs to the methylthiotransferase family. MiaB subfamily. In terms of assembly, interacts with CDK5R1 (p35 form). CDK5RAP1, CDK5RAP2 and CDK5RAP3 show competitive binding to CDK5R1. Probably forms a complex with CDK5R1 and CDK5. Requires [4Fe-4S] cluster as cofactor. Expressed in brain, liver, skeletal muscle and heart.

The protein resides in the mitochondrion. It catalyses the reaction N(6)-dimethylallyladenosine(37) in tRNA + (sulfur carrier)-SH + AH2 + 2 S-adenosyl-L-methionine = 2-methylsulfanyl-N(6)-dimethylallyladenosine(37) in tRNA + (sulfur carrier)-H + 5'-deoxyadenosine + L-methionine + A + S-adenosyl-L-homocysteine + 2 H(+). Functionally, methylthiotransferase that catalyzes the conversion of N6-(dimethylallyl)adenosine (i(6)A) to 2-methylthio-N6-(dimethylallyl)adenosine (ms(2)i(6)A) at position 37 (adjacent to the 3'-end of the anticodon) of four mitochondrial DNA-encoded tRNAs (Ser(UCN), Phe, Tyr and Trp). Essential for efficient and highly accurate protein translation by the ribosome. Specifically inhibits CDK5 activation by CDK5R1. Essential for efficient mitochondrial protein synthesis and respiratory chain. The protein is Mitochondrial tRNA methylthiotransferase CDK5RAP1 of Mus musculus (Mouse).